A 412-amino-acid polypeptide reads, in one-letter code: DnaJ homolog subfamily A member 2 (412 aa).

The J domain occupies 8–70; sequence KLYDILGVPP…EKRELYDRYG (63 aa). Lys39 carries the N6-acetyllysine modification. Phosphoserine occurs at positions 78 and 123. The CR-type zinc-finger motif lies at 130-214; the sequence is GKTTKLQLSK…CEGKKVIKEV (85 aa). Residue Lys134 forms a Glycyl lysine isopeptide (Lys-Gly) (interchain with G-Cter in SUMO2) linkage. The Zn(2+) site is built by Cys143 and Cys146. Residues 143–150 form a CXXCXGXG motif repeat; sequence CSACSGQG. Lys152 carries the post-translational modification N6-acetyllysine. Zn(2+) contacts are provided by Cys159, Cys162, Cys186, Cys189, Cys202, and Cys205. CXXCXGXG motif repeat units follow at residues 159 to 166, 186 to 193, and 202 to 209; these read CSACRGRG, CSDCNGEG, and CKKCEGKK. Residues 359-412 are disordered; that stretch reads PEVPNIIGDTEEVELQEFDSTRGSGGGQRREAYNDSSDEESSSHHGPGVQCAHQ. Tyr391 is modified (phosphotyrosine). A phosphoserine mark is found at Ser394 and Ser395. Residue Cys409 is modified to Cysteine methyl ester. The S-farnesyl cysteine moiety is linked to residue Cys409. Positions 410–412 are cleaved as a propeptide — removed in mature form; that stretch reads AHQ.

The protein localises to the membrane. Functionally, co-chaperone of Hsc70. Stimulates ATP hydrolysis and the folding of unfolded proteins mediated by HSPA1A/B (in vitro). This chain is DnaJ homolog subfamily A member 2 (DNAJA2), found in Bos taurus (Bovine).